Reading from the N-terminus, the 302-residue chain is tRNA pseudouridine synthase B (302 aa).

The Nucleophile role is filled by Asp38.

This sequence belongs to the pseudouridine synthase TruB family. Type 1 subfamily.

The enzyme catalyses uridine(55) in tRNA = pseudouridine(55) in tRNA. Its function is as follows. Responsible for synthesis of pseudouridine from uracil-55 in the psi GC loop of transfer RNAs. The protein is tRNA pseudouridine synthase B of Geobacillus thermodenitrificans (strain NG80-2).